A 136-amino-acid polypeptide reads, in one-letter code: Congerin-2 (136 aa).

Ser2 is subject to N-acetylserine. The Galectin domain occupies 4–136; sequence RAEVRNIPFK…DARLTFVRLE (133 aa). 70–76 lines the a beta-D-galactoside pocket; it reads WQQEERS.

Homodimer.

In terms of biological role, this protein binds beta-galactoside. Its physiological function is not yet known. The chain is Congerin-2 from Conger myriaster (Conger eel).